The sequence spans 191 residues: Adenylate cyclase CyaB (191 aa).

Residues 9–180 (RFEVEFKYRL…TRSYRTLCEQ (172 aa)) form the CYTH domain. The Proton acceptor role is filled by Tyr46.

The protein belongs to the adenylyl cyclase CyaB family.

It is found in the cytoplasm. The enzyme catalyses ATP = 3',5'-cyclic AMP + diphosphate. Its activity is regulated as follows. Inhibited by GTP. In terms of biological role, in vitro, CyaB catalyzes the biosynthesis of cyclic AMP (cAMP) from ATP. It seems that under the physiological conditions CyaB has no function in cAMP processes. In vitro, it is also able to hydrolyze substrates such as thiamine triphosphate (ThTP) and inorganic triphosphate (PPPi) at a low rate. It has a slight preference for ThTP over ATP and PPPi in the presence of manganese ions. This PPPase activity is probably not of physiological importance. The polypeptide is Adenylate cyclase CyaB (cyaB) (Aeromonas hydrophila).